The primary structure comprises 477 residues: Acetolactate synthase small subunit 2, chloroplastic (477 aa).

A chloroplast-targeting transit peptide spans Met1–Ala53. 2 ACT domains span residues Thr78 to Lys150 and Thr309 to His383. The L-valine site is built by Asp85, Ile89, Ile90, Asn103, Ile104, Asn316, Val320, Leu321, Asn334, and Ile335.

Belongs to the acetolactate synthase small subunit family. As to quaternary structure, the acetolactate synthase complex contains 4 homodimers of the large catalytic subunits, and 1 homotetramer of the small regulatory subunits. Expressed in roots in the vascular tissuem in cells around the quiescent center, in floral organs at the tips of young siliques and in the joint region between the silique and the pedicel. Barely detectable in mature leaves or siliques.

Its subcellular location is the plastid. The protein localises to the chloroplast. It localises to the peroxisome. The protein operates within amino-acid biosynthesis; L-isoleucine biosynthesis; L-isoleucine from 2-oxobutanoate: step 1/4. It functions in the pathway amino-acid biosynthesis; L-valine biosynthesis; L-valine from pyruvate: step 1/4. Regulatory subunit of acetohydroxy-acid synthase. Involved in the feed-back inhibition by branched-chain amino acids but not in herbicide tolerance. May play a role in valine and isoleucine-mediated feedback inhibition in roots. In vitro, inhibited by valine, but not leucine or isoleucine. Required for reproductive development and sodium homeostasis. The chain is Acetolactate synthase small subunit 2, chloroplastic from Arabidopsis thaliana (Mouse-ear cress).